The chain runs to 354 residues: Guanine nucleotide-binding protein G(i) subunit alpha-1 (354 aa).

Gly-2 carries the N-myristoyl glycine lipid modification. Cys-3 carries S-palmitoyl cysteine lipidation. Residues 32–354 form the G-alpha domain; that stretch reads REVKLLLLGA…KNNLKDCGLF (323 aa). The segment at 35 to 48 is G1 motif; that stretch reads KLLLLGAGESGKST. GTP contacts are provided by residues 43-48, 150-151, and 175-178; these read ESGKST, DS, and LRTR. Ser-47 contacts Mg(2+). Residues 173–181 are G2 motif; the sequence is DVLRTRVKT. Residue Thr-181 coordinates Mg(2+). Residues 196–205 form a G3 motif region; it reads FKMFDVGGQR. Residues 200–204, 269–272, and Ala-326 each bind GTP; these read DVGGQ and NKKD. The G4 motif stretch occupies residues 265–272; it reads ILFLNKKD. Residues 324–329 are G5 motif; sequence TCATDT.

It belongs to the G-alpha family. G(i/o/t/z) subfamily. Heterotrimeric G proteins are composed of 3 units; alpha, beta and gamma. The alpha chain contains the guanine nucleotide binding site. Part of a spindle orientation complex. Identified in complex with the beta subunit GNB1 and the gamma subunit GNG1. Identified in complex with the beta subunit GNB1 and the gamma subunit GNG2. GTP binding causes dissociation of the heterotrimer, liberating the individual subunits so that they can interact with downstream effector proteins. Post-translationally, myristoylation at Gly-2 is required for membrane anchoring before palmitoylation. Palmitoylation at Cys-3 varies with membrane lipid composition.

The protein localises to the nucleus. It is found in the cytoplasm. It localises to the cell membrane. The protein resides in the cytoskeleton. Its subcellular location is the microtubule organizing center. The protein localises to the centrosome. It is found in the cell cortex. It localises to the membrane. The enzyme catalyses GTP + H2O = GDP + phosphate + H(+). Its function is as follows. Guanine nucleotide-binding proteins (G proteins) function as transducers downstream of G protein-coupled receptors (GPCRs) in numerous signaling cascades. The alpha chain contains the guanine nucleotide binding site and alternates between an active, GTP-bound state and an inactive, GDP-bound state. Signaling by an activated GPCR promotes GDP release and GTP binding. The alpha subunit has a low GTPase activity that converts bound GTP to GDP, thereby terminating the signal. Both GDP release and GTP hydrolysis are modulated by numerous regulatory proteins. Signaling is mediated via effector proteins, such as adenylate cyclase. Inhibits adenylate cyclase activity, leading to decreased intracellular cAMP levels. Required for cortical dynein-dynactin complex recruitment during metaphase. The chain is Guanine nucleotide-binding protein G(i) subunit alpha-1 (gnai1) from Xenopus laevis (African clawed frog).